The sequence spans 678 residues: Probable metal-nicotianamine transporter YSL6 (678 aa).

14 helical membrane-spanning segments follow: residues 41-61, 65-85, 113-133, 158-178, 226-246, 279-299, 324-344, 394-414, 419-439, 467-487, 512-532, 561-581, 606-626, and 641-661; these read VTVR…LITH, LTVG…YFLV, CVVA…MLAM, LGWM…SLVA, ISFF…SCGF, IVNC…WPYI, VFIS…KIIY, LAGS…PMIF, WYLV…NSYG, GGVI…STAA, IGTT…WTAF, SALP…AILI, FYIG…LFVW, and IASG…ILSI.

The protein belongs to the YSL (TC 2.A.67.2) family. Expressed in roots and leaves.

It is found in the membrane. May be involved in the transport of nicotianamine-chelated metals. This Oryza sativa subsp. japonica (Rice) protein is Probable metal-nicotianamine transporter YSL6 (YSL6).